A 901-amino-acid chain; its full sequence is Protein translocase subunit SecA (901 aa).

Residues Q87, 105-109, and D512 each bind ATP; that span reads GEGKT. The disordered stretch occupies residues 852 to 901; that stretch reads AQMQQLSHQSDDEAAAEDLAAQTGERKVGRNDPCPCGSGKKYKQCHGRLS. 4 residues coordinate Zn(2+): C885, C887, C896, and H897. Positions 891-901 are enriched in basic residues; sequence KKYKQCHGRLS.

This sequence belongs to the SecA family. In terms of assembly, monomer and homodimer. Part of the essential Sec protein translocation apparatus which comprises SecA, SecYEG and auxiliary proteins SecDF-YajC and YidC. The cofactor is Zn(2+).

Its subcellular location is the cell inner membrane. The protein localises to the cytoplasm. The catalysed reaction is ATP + H2O + cellular proteinSide 1 = ADP + phosphate + cellular proteinSide 2.. In terms of biological role, part of the Sec protein translocase complex. Interacts with the SecYEG preprotein conducting channel. Has a central role in coupling the hydrolysis of ATP to the transfer of proteins into and across the cell membrane, serving both as a receptor for the preprotein-SecB complex and as an ATP-driven molecular motor driving the stepwise translocation of polypeptide chains across the membrane. This chain is Protein translocase subunit SecA, found in Klebsiella pneumoniae (strain 342).